The following is a 101-amino-acid chain: Ferredoxin Fdx2 (101 aa).

4Fe-4S ferredoxin-type domains follow at residues 1-29 (MATY…EGDE) and 31-64 (YVID…PNPQ). 8 residues coordinate [4Fe-4S] cluster: Cys-9, Cys-12, Cys-15, Cys-19, Cys-38, Cys-41, Cys-50, and Cys-54.

It depends on [4Fe-4S] cluster as a cofactor.

Ferredoxins are iron-sulfur proteins that transfer electrons in a wide variety of metabolic reactions. Fdx2 can receive electrons from both FdR_A and FdR_B ferredoxin reductases, with a preference for FdR_B compared with FdR_A, and transfer the electrons to the cytochrome P450 CYP260A1. The protein is Ferredoxin Fdx2 of Sorangium cellulosum (strain So ce56) (Polyangium cellulosum (strain So ce56)).